We begin with the raw amino-acid sequence, 209 residues long: Dual specificity phosphatase 29 (209 aa).

Positions Asn-44–Leu-193 constitute a Tyrosine-protein phosphatase domain. Asn-137–Arg-144 is a binding site for substrate. Residue Cys-138 is the Phosphocysteine intermediate of the active site.

Belongs to the protein-tyrosine phosphatase family. Non-receptor class dual specificity subfamily.

It is found in the cytoplasm. It localises to the nucleus. The enzyme catalyses O-phospho-L-tyrosyl-[protein] + H2O = L-tyrosyl-[protein] + phosphate. It carries out the reaction O-phospho-L-seryl-[protein] + H2O = L-seryl-[protein] + phosphate. It catalyses the reaction O-phospho-L-threonyl-[protein] + H2O = L-threonyl-[protein] + phosphate. Dual specificity phosphatase able to dephosphorylate phosphotyrosine, phosphoserine and phosphothreonine residues within the same substrate, with a preference for phosphotyrosine as a substrate. Involved in the modulation of AMPK and MAPK1/2 signaling pathways. This is Dual specificity phosphatase 29 (dusp29) from Xenopus tropicalis (Western clawed frog).